The chain runs to 279 residues: Large ribosomal subunit protein uL2 (279 aa).

Disordered stretches follow at residues 29–59 (PEKS…GGHK) and 224–279 (VAMN…KNKR). The span at 50–59 (TTRHKGGGHK) shows a compositional bias: basic residues. Residues 253–268 (PEGRTRRPNKESDKLI) are compositionally biased toward basic and acidic residues. Over residues 269 to 279 (VRRRRTGKNKR) the composition is skewed to basic residues.

This sequence belongs to the universal ribosomal protein uL2 family. As to quaternary structure, part of the 50S ribosomal subunit. Forms a bridge to the 30S subunit in the 70S ribosome.

Functionally, one of the primary rRNA binding proteins. Required for association of the 30S and 50S subunits to form the 70S ribosome, for tRNA binding and peptide bond formation. It has been suggested to have peptidyltransferase activity; this is somewhat controversial. Makes several contacts with the 16S rRNA in the 70S ribosome. The polypeptide is Large ribosomal subunit protein uL2 (Paenarthrobacter aurescens (strain TC1)).